We begin with the raw amino-acid sequence, 618 residues long: Methionine--tRNA ligase (618 aa).

A 'HIGH' region motif is present at residues 12–22; it reads YYVNAEPHLGH. Zn(2+) is bound by residues cysteine 127, cysteine 130, cysteine 144, and histidine 147. The short motif at 297–301 is the 'KMSKS' region element; the sequence is KMSKT. Residue lysine 300 participates in ATP binding. One can recognise a tRNA-binding domain in the interval 518 to 618; it reads DFAKVELRVA…GEVPPGAVVK (101 aa).

This sequence belongs to the class-I aminoacyl-tRNA synthetase family. MetG type 2A subfamily. Homodimer. It depends on Zn(2+) as a cofactor.

Its subcellular location is the cytoplasm. It catalyses the reaction tRNA(Met) + L-methionine + ATP = L-methionyl-tRNA(Met) + AMP + diphosphate. Is required not only for elongation of protein synthesis but also for the initiation of all mRNA translation through initiator tRNA(fMet) aminoacylation. This chain is Methionine--tRNA ligase (metG), found in Thermus thermophilus (strain ATCC 27634 / DSM 579 / HB8).